The sequence spans 323 residues: Acetyl esterase (323 aa).

The Involved in the stabilization of the negatively charged intermediate by the formation of the oxyanion hole motif lies at 91-93; the sequence is HGG. Catalysis depends on residues Ser165, Asp262, and His292.

This sequence belongs to the 'GDXG' lipolytic enzyme family. Homodimer. Interacts with MalT and MelA.

Its subcellular location is the cytoplasm. Displays esterase activity towards short chain fatty esters (acyl chain length of up to 8 carbons). Able to hydrolyze triacetylglycerol (triacetin) and tributyrylglycerol (tributyrin), but not trioleylglycerol (triolein) or cholesterol oleate. Negatively regulates MalT activity by antagonizing maltotriose binding. Inhibits MelA galactosidase activity. In Salmonella choleraesuis (strain SC-B67), this protein is Acetyl esterase.